The following is an 87-amino-acid chain: Exodeoxyribonuclease 7 small subunit (87 aa).

It belongs to the XseB family. Heterooligomer composed of large and small subunits.

It is found in the cytoplasm. It carries out the reaction Exonucleolytic cleavage in either 5'- to 3'- or 3'- to 5'-direction to yield nucleoside 5'-phosphates.. In terms of biological role, bidirectionally degrades single-stranded DNA into large acid-insoluble oligonucleotides, which are then degraded further into small acid-soluble oligonucleotides. This Xanthomonas campestris pv. campestris (strain 8004) protein is Exodeoxyribonuclease 7 small subunit.